The primary structure comprises 330 residues: Protein pelota homolog (330 aa).

It belongs to the eukaryotic release factor 1 family. Pelota subfamily. As to quaternary structure, monomer. Requires a divalent metal cation as cofactor.

Its subcellular location is the cytoplasm. May function in recognizing stalled ribosomes, interact with stem-loop structures in stalled mRNA molecules, and effect endonucleolytic cleavage of the mRNA. May play a role in the release non-functional ribosomes and degradation of damaged mRNAs. Has endoribonuclease activity. The sequence is that of Protein pelota homolog from Pyrobaculum neutrophilum (strain DSM 2338 / JCM 9278 / NBRC 100436 / V24Sta) (Thermoproteus neutrophilus).